Reading from the N-terminus, the 308-residue chain is Ribonuclease Z (308 aa).

Residues histidine 61, histidine 63, aspartate 65, histidine 66, histidine 139, aspartate 210, and histidine 268 each contribute to the Zn(2+) site. Aspartate 65 functions as the Proton acceptor in the catalytic mechanism.

This sequence belongs to the RNase Z family. As to quaternary structure, homodimer. Requires Zn(2+) as cofactor.

It catalyses the reaction Endonucleolytic cleavage of RNA, removing extra 3' nucleotides from tRNA precursor, generating 3' termini of tRNAs. A 3'-hydroxy group is left at the tRNA terminus and a 5'-phosphoryl group is left at the trailer molecule.. Zinc phosphodiesterase, which displays some tRNA 3'-processing endonuclease activity. Probably involved in tRNA maturation, by removing a 3'-trailer from precursor tRNA. This Natronomonas pharaonis (strain ATCC 35678 / DSM 2160 / CIP 103997 / JCM 8858 / NBRC 14720 / NCIMB 2260 / Gabara) (Halobacterium pharaonis) protein is Ribonuclease Z.